Reading from the N-terminus, the 320-residue chain is MGDIPAVGLSSWKASPGKVTEAVKEAIDAGYRHFDCAYFYHNEREVGAGIRCKIKEGAVRREDLFIATKLWCTCHKKSLVETACRKSLKALKLNYLDLYLIHWPMGFKPPHPEWIMSCSELSFCLSHPRVQDLPLDESNMVIPSDTDFLDTWEAMEDLVITGLVKNIGVSNFNHEQLERLLNKPGLRFKPLTNQIECHPYLTQKNLISFCQSRDVSVTAYRPLGGSCEGVDLIDNPVIKRIAKEHGKSPAQILIRFQIQRNVIVIPGSITPSHIKENIQVFDFELTQHDMDNILSLNRNLRLAMFPITKNHKDYPFHIEY.

Asp-35 contributes to the NADP(+) binding site. Tyr-40 acts as the Proton donor in catalysis. His-102 lines the substrate pocket. NADP(+) contacts are provided by residues Gln-194 and 265–277; that span reads IPGS…IKEN.

This sequence belongs to the aldo/keto reductase family. As to quaternary structure, monomer. Specifically expressed in testis. Expressed in testicular germ cells and testis interstitial cells.

The protein localises to the cytoplasm. The enzyme catalyses 1,5-anhydro-D-glucitol + NADP(+) = 1,5-anhydro-D-fructose + NADPH + H(+). Inhibited by p-chloromercuribenzoic acid and alkyliodines. Catalyzes the NADPH-dependent reduction of 1,5-anhydro-D-fructose (AF) to 1,5-anhydro-D-glucitol. Has low NADPH-dependent reductase activity towards 9,10-phenanthrenequinone (in vitro). In Homo sapiens (Human), this protein is 1,5-anhydro-D-fructose reductase (AKR1E2).